A 131-amino-acid chain; its full sequence is Increased copper sensitivity protein 3 (131 aa).

2 consecutive transmembrane segments (helical) span residues 35-55 and 74-94; these read ISVL…IFFS and IALT…IIAF.

It is found in the membrane. This Saccharomyces cerevisiae (strain ATCC 204508 / S288c) (Baker's yeast) protein is Increased copper sensitivity protein 3 (ICS3).